The sequence spans 396 residues: MLDNQTIATVKSTIPLLSATGPKLTAHFYERMFKHNPELKNIFNMSHQLNGDQREALFNAICAYAANIDNLKVLLPAVEKIAHKHASLNIQPEHYQIVGTHLLATLNEMFQPGNEILDAWGKAYGVLADIFINREEQIYHSGELTDGGWRGLRPFRINRKEVKSEVICSFEFAPQDGGKVMDYKPGQYLSIYLQDDSFANREIRQYSLTAAPNGSSYRIAIKREPQGIVSNHMHDKMQEGDTVWLTAPRGDFFLDIKPETPVTLISAGVGLTPMMSMLYHLHQQNHNSPINWLHAAEHGGHHAFSHEVAAIAQAMPNFAGTIWYREPRDEDQQGIHYQHKGFMDLTVLNEALKTEGMHFYFCGPVAFMQYVAKQLLDMGIDKQFIHYECFGPHKVI.

The Globin domain occupies 1–136; it reads MLDNQTIATV…LADIFINREE (136 aa). Residue His-85 participates in heme b binding. Catalysis depends on charge relay system residues Tyr-95 and Glu-135. A reductase region spans residues 147-396; the sequence is GGWRGLRPFR…YECFGPHKVI (250 aa). One can recognise an FAD-binding FR-type domain in the interval 150 to 255; that stretch reads RGLRPFRINR…TAPRGDFFLD (106 aa). FAD is bound by residues Tyr-188 and 204–207; that span reads RQYS. 268-273 serves as a coordination point for NADP(+); that stretch reads GVGLTP. Residue 389–392 coordinates FAD; sequence CFGP.

Belongs to the globin family. Two-domain flavohemoproteins subfamily. It in the C-terminal section; belongs to the flavoprotein pyridine nucleotide cytochrome reductase family. Heme b is required as a cofactor. It depends on FAD as a cofactor.

It catalyses the reaction 2 nitric oxide + NADPH + 2 O2 = 2 nitrate + NADP(+) + H(+). It carries out the reaction 2 nitric oxide + NADH + 2 O2 = 2 nitrate + NAD(+) + H(+). Is involved in NO detoxification in an aerobic process, termed nitric oxide dioxygenase (NOD) reaction that utilizes O(2) and NAD(P)H to convert NO to nitrate, which protects the bacterium from various noxious nitrogen compounds. Therefore, plays a central role in the inducible response to nitrosative stress. This is Flavohemoprotein from Photorhabdus laumondii subsp. laumondii (strain DSM 15139 / CIP 105565 / TT01) (Photorhabdus luminescens subsp. laumondii).